The following is a 303-amino-acid chain: MGDITVRWTQRLDGETADAVRELLAAASAADGVAPVSEQAVLSLGEPGAARHLLAEHDGELAGYANLVPAHGDHPAMAEAAVAPARRGRGIGTALVREALAAGGADARVWAHGDRPAAKAVAARLGLRTARELWQMRRSLATPQLPELVVPDGIVLRTYAGPADDAELLRVNNAAFDWHPEQGGWTQRDIAVRRAESWFDPAGLFLATDTAAPDRVLGFHWTKVHADEQPPVGEVYVVGIDPAAQGRGLGRLLTLAGLHHLRERGLGGVLLYTEADNTAAVNTYTKLGFAPAHVDVAYAANGA.

N-acetyltransferase domains lie at 4 to 141 (ITVR…RSLA) and 154 to 303 (IVLR…ANGA). Glutamate 38 serves as a coordination point for 1D-myo-inositol 2-(L-cysteinylamino)-2-deoxy-alpha-D-glucopyranoside. 80–82 (AAV) contributes to the acetyl-CoA binding site. 3 residues coordinate 1D-myo-inositol 2-(L-cysteinylamino)-2-deoxy-alpha-D-glucopyranoside: glutamate 181, lysine 223, and glutamate 234. Acetyl-CoA-binding positions include 238–240 (VGI) and 245–251 (QGRGLGR). Residue tyrosine 272 coordinates 1D-myo-inositol 2-(L-cysteinylamino)-2-deoxy-alpha-D-glucopyranoside. 277–282 (NTAAVN) is a binding site for acetyl-CoA.

The protein belongs to the acetyltransferase family. MshD subfamily. Monomer.

It carries out the reaction 1D-myo-inositol 2-(L-cysteinylamino)-2-deoxy-alpha-D-glucopyranoside + acetyl-CoA = mycothiol + CoA + H(+). Functionally, catalyzes the transfer of acetyl from acetyl-CoA to desacetylmycothiol (Cys-GlcN-Ins) to form mycothiol. In Nocardia farcinica (strain IFM 10152), this protein is Mycothiol acetyltransferase.